Here is a 554-residue protein sequence, read N- to C-terminus: Serine/threonine-protein phosphatase 2B catalytic subunit (554 aa).

Residues Asp-119, His-121, and Asp-147 each coordinate Fe cation. Residues Asp-147 and Asn-179 each coordinate Zn(2+). His-180 acts as the Proton donor in catalysis. The Zn(2+) site is built by His-228 and His-310. The disordered stretch occupies residues 411 to 433; it reads LKESAPTQHKQPAPSENENKADQ. A compositionally biased stretch (polar residues) spans 415–426; that stretch reads APTQHKQPAPSE.

This sequence belongs to the PPP phosphatase family. PP-2B subfamily. Composed of two components (A and B), the A component is the catalytic subunit and the B component confers calcium sensitivity. Requires Fe(3+) as cofactor. It depends on Zn(2+) as a cofactor.

It carries out the reaction O-phospho-L-seryl-[protein] + H2O = L-seryl-[protein] + phosphate. It catalyses the reaction O-phospho-L-threonyl-[protein] + H2O = L-threonyl-[protein] + phosphate. Its function is as follows. Calcium-dependent, calmodulin-stimulated protein phosphatase. This subunit may have a role in the calmodulin activation of calcineurin. Appears to be involved in cytokinesis, mating, transport, nuclear and spindle pole body positioning, and cell shape. The chain is Serine/threonine-protein phosphatase 2B catalytic subunit (ppb1) from Schizosaccharomyces pombe (strain 972 / ATCC 24843) (Fission yeast).